The primary structure comprises 246 residues: 14-3-3 protein beta/alpha (246 aa).

An N-acetylmethionine modification is found at Met1. N-acetylthreonine; in 14-3-3 protein beta/alpha, N-terminally processed is present on Thr2. Phosphothreonine is present on Thr2. Lys5 carries the N6-acetyllysine modification. Lys51 bears the N6-acetyllysine; alternate mark. Residue Lys51 forms a Glycyl lysine isopeptide (Lys-Gly) (interchain with G-Cter in SUMO2); alternate linkage. Ser60 bears the Phosphoserine mark. The residue at position 70 (Lys70) is an N6-acetyllysine. Residues Tyr84 and Tyr106 each carry the 3'-nitrotyrosine modification. Lys117 is modified (N6-acetyllysine). 2 positions are modified to phosphoserine: Ser186 and Ser232.

It belongs to the 14-3-3 family. Homodimer. Interacts with SAMSN1 and PRKCE. Interacts with AKAP13. Interacts with SSH1 and TORC2/CRTC2. Interacts with ABL1; the interaction results in cytoplasmic location of ABL1 and inhibition of cABL-mediated apoptosis. Interacts with ROR2 (dimer); the interaction results in phosphorylation of YWHAB on tyrosine residues. Interacts with GAB2. Interacts with YAP1 (phosphorylated form). Interacts with the phosphorylated (by AKT1) form of SRPK2. Interacts with PKA-phosphorylated AANAT. Interacts with MYO1C. Interacts with SIRT2. Interacts with the 'Thr-369' phosphorylated form of DAPK2. Interacts with PI4KB, TBC1D22A and TBC1D22B. Interacts with the 'Ser-1134' and 'Ser-1161' phosphorylated form of SOS1. Interacts (via phosphorylated form) with YWHAB; this interaction occurs in a protein kinase AKT1-dependent manner. Interacts with SLITRK1. Interacts with SYNPO2 (phosphorylated form); YWHAB competes with ACTN2 for interaction with SYNPO2. Interacts with RIPOR2 (via phosphorylated form); this interaction occurs in a chemokine-dependent manner and does not compete for binding of RIPOR2 with RHOA nor blocks inhibition of RIPOR2-mediated RHOA activity. Interacts with MARK2 and MARK3. Interacts with TESK1; the interaction is dependent on the phosphorylation of TESK1 'Ser-439' and inhibits TESK1 kinase activity. Interacts with MEFV. Interacts with HDAC4. Interacts with ADAM22 (via C-terminus). Post-translationally, the alpha, brain-specific form differs from the beta form in being phosphorylated. Phosphorylated on Ser-60 by protein kinase C delta type catalytic subunit in a sphingosine-dependent fashion. In terms of processing, isoform Short contains a N-acetylmethionine at position 1.

It localises to the cytoplasm. The protein localises to the melanosome. Functionally, adapter protein implicated in the regulation of a large spectrum of both general and specialized signaling pathways. Binds to a large number of partners, usually by recognition of a phosphoserine or phosphothreonine motif. Binding generally results in the modulation of the activity of the binding partner. Negative regulator of osteogenesis. Blocks the nuclear translocation of the phosphorylated form (by AKT1) of SRPK2 and antagonizes its stimulatory effect on cyclin D1 expression resulting in blockage of neuronal apoptosis elicited by SRPK2. Negative regulator of signaling cascades that mediate activation of MAP kinases via AKAP13. In Rattus norvegicus (Rat), this protein is 14-3-3 protein beta/alpha (Ywhab).